An 830-amino-acid polypeptide reads, in one-letter code: MEAFGGFFVDEKAARVENIFLEFLRRFKEADAAEAFYETELEAMRSRESTTMYVDFAHVMRFNDVLQKAISEEYLRFEPYLRNACKRFVMEQRTGENRAPIISDDSPNKDINIAFYNIPMLKRLRELGTAEIGKLTAVMGVVTRTSEVRPELLQGTFKCLDCGNVVKNVEQQFKYTEPIICVNATCQNRSKWALLRQESKFTDWQRVRMQETSKEIPAGSLPRSLDVILRHEIVEKARAGDTVIFTGTVAAVPDVMALTSPGERAECRREAPQRKNGSGVQEGVKGLKSLGVRDLSYRLAFVANSVQVADGRREVDIRDRDIDGDDSERQKFTEEEEDEVVRMRNVPDFFNKIVDSICPTVFGHQEIKRAILLMLLGGVHKITHEGINLRGDINVCIVGDPSCAKSQFLKYTAGIVPRSVYTSGKSSSAAGLTATVAKEPETGEFCIEAGALMLADNGICCIDEFDKMDIKDQVAIHEAMEQQTISITKAGIQATLNARTSILAAANPTGGRYDKSKPLKYNVALPPAILSRFDLVYIMIDEPDENTDYHIAHHIVRVHQKREEALAPAFSTAELKRYIAFAKSLKPQLSSEAKKVLVESYVTLRRGDSTPGTRVAYRMTVRQLEALIRLSEAIARSHLERVVLPAHVRMAVKLLKTSIISVESSEVDLSDFQDADDGTNVPADNDAGQPTEMDAAPQQDGPENEQAADTGKKKLVITEEHFQRVTQALVMRLRQHEESVTKDGDGLAGMKQGDLIIWYVEQQNAQGAYSSTAEVKEEVKCIKAIIERLIQRDGHLIVIDEGAAPAADDGAARRTSESRILAVNPNYVID.

A C4-type zinc finger spans residues 159–186; the sequence is CLDCGNVVKNVEQQFKYTEPIICVNATC. The region spanning 349–555 is the MCM domain; that stretch reads FFNKIVDSIC…NTDYHIAHHI (207 aa). 399–406 is an ATP binding site; it reads GDPSCAKS. The Arginine finger signature appears at 531–534; sequence SRFD. The interval 671-710 is disordered; sequence DFQDADDGTNVPADNDAGQPTEMDAAPQQDGPENEQAADT.

It belongs to the MCM family. Component of the minichromosome maintenance (MCM) complex, a heterotetramer composed of MCM2, MCM3, MCM4, MCM5, MCM6 and MCM7.

The protein localises to the nucleus. It catalyses the reaction ATP + H2O = ADP + phosphate + H(+). Functionally, probable component of the MCM2-7 complex (MCM complex) that may function as a DNA helicase and which is essential to undergo a single round of replication initiation and elongation per cell cycle in eukaryotic cells. The polypeptide is DNA replication licensing factor MCM6 (MCM6) (Oryza sativa subsp. indica (Rice)).